We begin with the raw amino-acid sequence, 346 residues long: Aldose 1-epimerase (346 aa).

Substrate is bound at residue Arg-79. The active-site Proton donor is the His-175. Asp-245 contributes to the substrate binding site. Glu-309 acts as the Proton acceptor in catalysis.

The protein belongs to the aldose epimerase family.

It localises to the cytoplasm. The catalysed reaction is alpha-D-glucose = beta-D-glucose. It functions in the pathway carbohydrate metabolism; hexose metabolism. Mutarotase converts alpha-aldose to the beta-anomer. It is active on D-glucose, L-arabinose, D-xylose, D-galactose, maltose and lactose. The sequence is that of Aldose 1-epimerase (galM) from Escherichia coli (strain K12).